We begin with the raw amino-acid sequence, 201 residues long: Aminoglycoside N(6')-acetyltransferase type 1 (201 aa).

In terms of domain architecture, N-acetyltransferase spans 25 to 192 (VTLRLMTEHD…PAVYMVQTRQ (168 aa)). Substrate is bound by residues tryptophan 51 and aspartate 154. Position 159 (asparagine 159) interacts with acetyl-CoA.

Homodimer.

The enzyme catalyses kanamycin B + acetyl-CoA = N(6')-acetylkanamycin B + CoA + H(+). Catalyzes the transfer of an acetyl group from acetyl-CoA to the 6'-amino group of aminoglycoside molecules conferring resistance to antibiotics containing the purpurosamine ring including amikacin. The protein is Aminoglycoside N(6')-acetyltransferase type 1 (aacA4) of Klebsiella pneumoniae.